Here is a 140-residue protein sequence, read N- to C-terminus: MQPSPDSPAPLNVTVPFDSELGLQFTELGPDGARAQLDVRPKLLQLTGVVHGGVYCAMIESIASMAAFAWLNSHGEGGSVVGVNNNTDFVRSISSGMVYGTAEPLHRGRRQQLWLVTITDDTDRVVARGQVRLQNLEARP.

The protein belongs to the thioesterase PaaI family.

This Mycobacterium tuberculosis (strain CDC 1551 / Oshkosh) protein is Putative esterase MT1895.